We begin with the raw amino-acid sequence, 500 residues long: Metal transporter Nramp3.1 (500 aa).

Helical transmembrane passes span 51 to 71 (LWLF…PGNL), 79 to 99 (AIAG…GLLV), 128 to 148 (MILW…EVIG), 160 to 180 (VLPL…FLFL), 188 to 208 (LEAA…WMFA), 234 to 254 (AVGV…SALV), 280 to 300 (AALA…AKGF), 322 to 342 (YGGG…AAGQ), 370 to 390 (ALIT…VFDT), 401 to 421 (WLNM…LCLV), 439 to 459 (VSWL…LDFF), and 467 to 487 (VFTT…IYLI).

The protein belongs to the NRAMP (TC 2.A.55) family. In terms of tissue distribution, expressed in roots, stems, buds and leaves.

The protein localises to the golgi apparatus. It localises to the trans-Golgi network membrane. The catalysed reaction is Mn(2+)(in) = Mn(2+)(out). It catalyses the reaction Fe(2+)(in) = Fe(2+)(out). Divalent metal transporter. Can transport manganese (Mn) and iron (Fe). Involved in the control of cell-to-cell transport of manganese (Mn) between organs and tissues to monitor Mn homeostasis. In Populus trichocarpa (Western balsam poplar), this protein is Metal transporter Nramp3.1.